Reading from the N-terminus, the 366-residue chain is Spermine synthase (366 aa).

Alanine 2 is subject to N-acetylalanine. Serine 57 is modified (phosphoserine). Residues arginine 122 to lysine 362 enclose the PABS domain. Glutamine 148 lines the S-adenosyl 3-(methylsulfanyl)propylamine pocket. Residues tyrosine 177 and aspartate 201 each contribute to the spermidine site. Residues glutamate 220 and aspartate 255–cysteine 256 contribute to the S-adenosyl 3-(methylsulfanyl)propylamine site. The active-site Proton acceptor is aspartate 276. The spermidine site is built by tyrosine 351 and glutamate 353.

It belongs to the spermidine/spermine synthase family. As to quaternary structure, homodimer. Dimerization is mediated through the N-terminal domain and seems to be required for activity as deletion of the N-terminal domain causes complete loss of activity.

The catalysed reaction is S-adenosyl 3-(methylsulfanyl)propylamine + spermidine = spermine + S-methyl-5'-thioadenosine + H(+). It functions in the pathway amine and polyamine biosynthesis; spermine biosynthesis; spermine from spermidine: step 1/1. In terms of biological role, catalyzes the production of spermine from spermidine and decarboxylated S-adenosylmethionine (dcSAM). Required for normal viability, growth and fertility. The polypeptide is Spermine synthase (Sms) (Mus musculus (Mouse)).